The following is a 350-amino-acid chain: Palmitoyltransferase erf2 (350 aa).

At 1–86 (MSYEKHSDAK…RLQMSSQYKA (86 aa)) the chain is on the cytoplasmic side. A helical transmembrane segment spans residues 87–107 (FLISLFALILPGVLFFIFSAF). The Lumenal segment spans residues 108-112 (WLWHH). A helical membrane pass occupies residues 113 to 133 (VSPAVPITFAYLYALAVVSMF). Topologically, residues 134–225 (KCSTADPGIL…NTCIGRRNYR (92 aa)) are cytoplasmic. Positions 182 to 232 (VYCHTCHLYRPPRASHCHLCDNCVEYLDHHCIWLNTCIGRRNYRYYFIFLL) constitute a DHHC domain. Catalysis depends on C212, which acts as the S-palmitoyl cysteine intermediate. Residues 226-246 (YYFIFLLSVVLSALYLTGLGF) traverse the membrane as a helical segment. Residues 247–270 (YTSIGSFHESTDTNFAAHLRRPWA) lie on the Lumenal side of the membrane. A helical transmembrane segment spans residues 271–291 (GVSFFLGIYGALGAILPGILF). Over 292 to 350 (CYQCYLISVGQNVHEYLRAKSTETEDVHPFHDSIWLNFLVVLCRPKNVSYVRPTRKSYV) the chain is Cytoplasmic.

The protein belongs to the DHHC palmitoyltransferase family. ERF2/ZDHHC9 subfamily. In terms of assembly, interacts with erf4. In terms of processing, autopalmitoylated.

It is found in the endoplasmic reticulum membrane. The protein localises to the golgi apparatus. It localises to the golgi stack membrane. It carries out the reaction L-cysteinyl-[protein] + hexadecanoyl-CoA = S-hexadecanoyl-L-cysteinyl-[protein] + CoA. Its function is as follows. The erf2-erf4 complex is a palmitoyltransferase with a major role in driving sexual development. Palmitoylates ras1. Palmitoylates isp3. Palmitoylates rho3. This chain is Palmitoyltransferase erf2, found in Schizosaccharomyces pombe (strain 972 / ATCC 24843) (Fission yeast).